Reading from the N-terminus, the 311-residue chain is 4-diphosphocytidyl-2-C-methyl-D-erythritol kinase (311 aa).

Lys16 is a catalytic residue. 100 to 110 is an ATP binding site; the sequence is PIGAGLAGGSS. Asp142 is an active-site residue.

Belongs to the GHMP kinase family. IspE subfamily.

It carries out the reaction 4-CDP-2-C-methyl-D-erythritol + ATP = 4-CDP-2-C-methyl-D-erythritol 2-phosphate + ADP + H(+). The protein operates within isoprenoid biosynthesis; isopentenyl diphosphate biosynthesis via DXP pathway; isopentenyl diphosphate from 1-deoxy-D-xylulose 5-phosphate: step 3/6. Functionally, catalyzes the phosphorylation of the position 2 hydroxy group of 4-diphosphocytidyl-2C-methyl-D-erythritol. The sequence is that of 4-diphosphocytidyl-2-C-methyl-D-erythritol kinase from Prochlorococcus marinus (strain MIT 9312).